Here is a 1441-residue protein sequence, read N- to C-terminus: MATAAAAAAVMAPPGCPGSCPNFAVVCSFLERYGPLLDLPELPFPELERVLQAPPPDVGNGEVPKELVELHLKLMRKIGKSVTADRWEKYLIKICQEFNSTWAWEMEKKGYLEMSVECKLALLKYLCECQFDDNLKFKNIINEEDADTMRLQPIGRDKDGLMYWYQLDQDHNVRMYIEEQDDQDGSSWKCIVRNRNELAETLALLKAQIDPVLLKNSSQQDNSSRESPSLEDEETKKEEETPKQEEQKESEKMKSEEQPMDLENRSTANVLEETTVKKEKEDEKELVKLPVIVKLEKPLPENEEKKIIKEESDSFKENVKPIKVEVKECRADPKDTKSSMEKPVAQEPERIEFGGNIKSSHEITEKSTEETEKLKNDQQAKIPLKKREIKLSDDFDSPVKGPLCKSVTPTKEFLKDEIKQEEETCKRISTITALGHEGKQLVNGEVSDERVAPNFKTEPIETKFYETKEESYSPSKDRNIITEGNGTESLNSVITSMKTGELEKETAPLRKDADSSISVLEIHSQKAQIEEPDPPEMETSLDSSEMAKDLSSKTALSSTESCTMKGEEKSPKTKKDKRPPILECLEKLEKSKKTFLDKDAQRLSPIPEEVPKSTLESEKPGSPEAAETSPPSNIIDHCEKLASEKEVVECQSTSTVGGQSVKKVDLETLKEDSEFTKVEMDNLDNAQTSGIEEPSETKGSMQKSKFKYKLVPEEETTASENTEITSERQKEGIKLTIRISSRKKKPDSPPKVLEPENKQEKTEKEEEKTNVGRTLRRSPRISRPTAKVAEIRDQKADKKRGEGEDEVEEESTALQKTDKKEILKKSEKDTNSKVSKVKPKGKVRWTGSRTRGRWKYSSNDESEGSGSEKSSAASEEEEEKESEEAILADDDEPCKKCGLPNHPELILLCDSCDSGYHTACLRPPLMIIPDGEWFCPPCQHKLLCEKLEEQLQDLDVALKKKERAERRKERLVYVGISIENIIPPQEPDFSEDQEEKKKDSKKSKANLLERRSTRTRKCISYRFDEFDEAIDEAIEDDIKEADGGGVGRGKDISTITGHRGKDISTILDEERKENKRPQRAAAARRKKRRRLNDLDSDSNLDEEESEDEFKISDGSQDEFVVSDENPDESEEDPPSNDDSDTDFCSRRLRRHPSRPMRQSRRLRRKTPKKKYSDDDEEEESEENSRDSESDFSDDFSDDFVETRRRRSRRNQKRQINYKEDSESDGSQKSLRRGKEIRRVHKRRLSSSESEESYLSKNSEDDELAKESKRSVRKRGRSTDEYSEADEEEEEEEGKPSRKRLHRIETDEEESCDNAHGDANQPARDSQPRVLPSEQESTKKPYRIESDEEEDFENVGKVGSPLDYSLVDLPSTNGQSPGKAIENLIGKPTEKSQTPKDNSTASASLASNGTSGGQEAGAPEEEEDELLRVTDLVDYVCNSEQL.

The 68-residue stretch at Pro-17–Ala-84 folds into the DDT domain. Residues Lys-136 and Lys-215 each participate in a glycyl lysine isopeptide (Lys-Gly) (interchain with G-Cter in SUMO2) cross-link. Positions Lys-215 to Ser-227 are enriched in polar residues. A disordered region spans residues Lys-215 to Glu-283. The residue at position 227 (Ser-227) is a Phosphoserine. 2 stretches are compositionally biased toward basic and acidic residues: residues Glu-234–Glu-257 and Thr-274–Glu-283. Residues Lys-236, Lys-243, Lys-248, Lys-252, and Lys-254 each participate in a glycyl lysine isopeptide (Lys-Gly) (interchain with G-Cter in SUMO2) cross-link. A Glycyl lysine isopeptide (Lys-Gly) (interchain with G-Cter in SUMO1); alternate cross-link involves residue Lys-277. Lys-277 is covalently cross-linked (Glycyl lysine isopeptide (Lys-Gly) (interchain with G-Cter in SUMO2); alternate). Glycyl lysine isopeptide (Lys-Gly) (interchain with G-Cter in SUMO2) cross-links involve residues Lys-284, Lys-288, Lys-294, Lys-305, Lys-306, Lys-309, Lys-323, Lys-327, Lys-337, Lys-342, Lys-358, Lys-373, Lys-381, and Lys-390. Residues Arg-330–Met-340 are compositionally biased toward basic and acidic residues. The tract at residues Arg-330–Lys-385 is disordered. Residues Ser-359 to Gln-378 show a composition bias toward basic and acidic residues. Ser-392 and Ser-397 each carry phosphoserine. Glycyl lysine isopeptide (Lys-Gly) (interchain with G-Cter in SUMO2) cross-links involve residues Lys-400, Lys-405, Lys-415, and Lys-419. Position 429 is a phosphoserine (Ser-429). Lys-439 is covalently cross-linked (Glycyl lysine isopeptide (Lys-Gly) (interchain with G-Cter in SUMO2)). Lys-456 participates in a covalent cross-link: Glycyl lysine isopeptide (Lys-Gly) (interchain with G-Cter in SUMO1); alternate. A Glycyl lysine isopeptide (Lys-Gly) (interchain with G-Cter in SUMO2); alternate cross-link involves residue Lys-456. Glycyl lysine isopeptide (Lys-Gly) (interchain with G-Cter in SUMO2) cross-links involve residues Lys-463 and Lys-468. Over residues Thr-467–Ile-480 the composition is skewed to basic and acidic residues. The disordered stretch occupies residues Thr-467–Ile-634. Ser-473 bears the Phosphoserine mark. Positions Thr-482 to Lys-498 are enriched in polar residues. Lys-498 participates in a covalent cross-link: Glycyl lysine isopeptide (Lys-Gly) (interchain with G-Cter in SUMO2). Over residues Gly-500–Asp-514 the composition is skewed to basic and acidic residues. The residue at position 524 (Ser-524) is a Phosphoserine. Residues Ser-552 to Cys-562 are compositionally biased toward polar residues. Residue Lys-565 forms a Glycyl lysine isopeptide (Lys-Gly) (interchain with G-Cter in SUMO2) linkage. Over residues Lys-565–Gln-601 the composition is skewed to basic and acidic residues. A phosphoserine mark is found at Ser-570 and Ser-604. Residues Glu-609–Gly-621 are compositionally biased toward basic and acidic residues. Ser-622 carries the phosphoserine modification. Phosphothreonine is present on Thr-628. Ser-629 carries the post-translational modification Phosphoserine. Residues Lys-662, Lys-663, Lys-670, Lys-677, Lys-698, and Lys-709 each participate in a glycyl lysine isopeptide (Lys-Gly) (interchain with G-Cter in SUMO2) cross-link. Residues Phe-675–Leu-887 are disordered. Ser-748 carries the phosphoserine modification. Composition is skewed to basic and acidic residues over residues Leu-753–Asn-770, Ala-789–Glu-802, and Lys-816–Asn-831. Residues Lys-758, Lys-768, Lys-795, and Lys-799 each participate in a glycyl lysine isopeptide (Lys-Gly) (interchain with G-Cter in SUMO2) cross-link. A compositionally biased stretch (low complexity) spans Gly-864–Ala-873. The span at Ser-874 to Leu-887 shows a compositional bias: acidic residues. Ser-882 is modified (phosphoserine). The segment at Asp-891 to Lys-941 adopts a PHD-type zinc-finger fold. Residues Leu-942–Ser-1012 adopt a coiled-coil conformation. Residues Pro-983–Leu-1007 are disordered. Lys-1039 participates in a covalent cross-link: Glycyl lysine isopeptide (Lys-Gly) (interchain with G-Cter in SUMO2). Lys-1050 is modified (N6-acetyllysine). Residues Ile-1063–Val-1428 are disordered. Acidic residues-rich tracts occupy residues Leu-1094 to Asp-1107 and Val-1120 to Thr-1141. Phosphoserine occurs at positions 1096, 1098, and 1105. The segment covering Arg-1146 to Lys-1169 has biased composition (basic residues). Residues Ser-1189–Phe-1199 show a composition bias toward acidic residues. Residues Arg-1203–Lys-1212 are compositionally biased toward basic residues. Phosphoserine is present on residues Ser-1221, Ser-1223, and Ser-1226. The segment covering Ser-1229–Leu-1244 has biased composition (basic residues). Phosphoserine occurs at positions 1258 and 1277. Phosphothreonine is present on Thr-1278. The segment covering Glu-1280 to Glu-1292 has biased composition (acidic residues). Residue Thr-1305 is modified to Phosphothreonine. Residues Ser-1325 and Ser-1336 each carry the phosphoserine modification. Over residues Glu-1335–Glu-1344 the composition is skewed to basic and acidic residues. Lys-1339 is modified (N6-acetyllysine). 3 positions are modified to phosphoserine: Ser-1345, Ser-1359, and Ser-1375. Over residues Pro-1394 to Gly-1408 the composition is skewed to polar residues.

As to quaternary structure, component of the RSF-1 ISWI chromatin-remodeling complex at least composed of SMARCA1 and RSF1. Within the RSF-1 ISWI chromatin-remodeling complex interacts with SMARCA1. Component of the RSF-5 ISWI chromatin-remodeling complex (also called the RSF complex) at least composed of SMARCA5/SNF2H and RSF1. Within the RSF-5 ISWI chromatin-remodeling complex interacts with SMARCA5/SNF2H; the interaction is direct. Identified in a centromere complex containing histones H2A, H2B and H4, and at least CENPA, CENPB, CENPC, CENPT, CENPN, HJURP, SUPT16H, SSRP1 and RSF1. Also binds the HBV pX/HBx protein, which is required to activate transcription of the viral genome. Phosphorylated. As to expression, ubiquitously expressed. Highly expressed in the heart, skeletal muscle, kidney and placenta. Expressed at low levels in the brain and colon.

Its subcellular location is the nucleus. Regulatory subunit of the ATP-dependent RSF-1 and RSF-5 ISWI chromatin-remodeling complexes, which form ordered nucleosome arrays on chromatin and facilitate access to DNA during DNA-templated processes such as DNA replication, transcription, and repair. Binds to core histones together with SMARCA5, and is required for the assembly of regular nucleosome arrays by the RSF-5 ISWI chromatin-remodeling complex. Directly stimulates the ATPase activity of SMARCA1 and SMARCA5 in the RSF-1 and RSF-5 ISWI chromatin-remodeling complexes, respectively. The RSF-1 ISWI chromatin remodeling complex has a lower ATP hydrolysis rate than the RSF-5 ISWI chromatin-remodeling complex. The complexes do not have the ability to slide mononucleosomes to the center of a DNA template. Facilitates transcription of hepatitis B virus (HBV) genes by the pX transcription activator. In case of infection by HBV, together with pX, it represses TNF-alpha induced NF-kappa-B transcription activation. Represses transcription when artificially recruited to chromatin by fusion to a heterogeneous DNA binding domain. The chain is Remodeling and spacing factor 1 (RSF1) from Homo sapiens (Human).